A 120-amino-acid chain; its full sequence is Putative ferric transport system permease-like protein AfuB (120 aa).

The Cytoplasmic portion of the chain corresponds to 1–38; it reads MESLPGQIDKSLDEASLSLRAGSLRTITHILLPLLRPA. Residues 1-102 enclose the ABC transmembrane type-1 domain; that stretch reads MESLPGQIDK…VVMLAIIFIF (102 aa). The helical transmembrane segment at 39-59 threads the bilayer; it reads ILSALIYSFVRAITTVSAIVF. The Periplasmic portion of the chain corresponds to 60–81; that stretch reads LVTPDTRVATAYILNRVEDGEY. The helical transmembrane segment at 82 to 102 threads the bilayer; that stretch reads GVAIAYGSILIVVMLAIIFIF. The Cytoplasmic segment spans residues 103–120; the sequence is DWLIGESRTSRSKAKNQA.

It belongs to the binding-protein-dependent transport system permease family. FbpB subfamily.

It localises to the cell inner membrane. A severely truncated paralog of the AfuB uptake protein, homologous only to the last 20% of the intact protein in Actinobacillus. This is Putative ferric transport system permease-like protein AfuB (afuB) from Escherichia coli (strain K12).